The following is a 415-amino-acid chain: Multidrug resistance protein MdtA (415 aa).

A signal peptide spans 1–21 (MKGSYKSRWVIVIVVVIAAIA). Residues 31-46 (DSQSAAPGATKQAQQS) show a composition bias toward polar residues. Disordered regions lie at residues 31–56 (DSQS…GMRA) and 392–415 (EAQS…GARS). The segment covering 399–415 (PEEKATSREYAKKGARS) has biased composition (basic and acidic residues).

It belongs to the membrane fusion protein (MFP) (TC 8.A.1) family. As to quaternary structure, part of a tripartite efflux system composed of MdtA, MdtB and MdtC.

The protein resides in the cell inner membrane. In terms of biological role, the MdtABC tripartite complex confers resistance against novobiocin and deoxycholate. The protein is Multidrug resistance protein MdtA of Escherichia coli O6:K15:H31 (strain 536 / UPEC).